We begin with the raw amino-acid sequence, 165 residues long: Phosphopantetheine adenylyltransferase (165 aa).

S10 serves as a coordination point for substrate. Residues 10 to 11 (SF) and H18 each bind ATP. K42, T79, and R93 together coordinate substrate. ATP-binding positions include 94 to 96 (GLR), E104, and 129 to 135 (VRPITAT).

It belongs to the bacterial CoaD family. Homohexamer. Mg(2+) serves as cofactor.

The protein resides in the cytoplasm. The enzyme catalyses (R)-4'-phosphopantetheine + ATP + H(+) = 3'-dephospho-CoA + diphosphate. It functions in the pathway cofactor biosynthesis; coenzyme A biosynthesis; CoA from (R)-pantothenate: step 4/5. Its function is as follows. Reversibly transfers an adenylyl group from ATP to 4'-phosphopantetheine, yielding dephospho-CoA (dPCoA) and pyrophosphate. The chain is Phosphopantetheine adenylyltransferase from Nitrobacter winogradskyi (strain ATCC 25391 / DSM 10237 / CIP 104748 / NCIMB 11846 / Nb-255).